The sequence spans 291 residues: Phosphatidylserine decarboxylase proenzyme 2 (291 aa).

Active-site charge relay system; for autoendoproteolytic cleavage activity residues include Asp-112 and Ser-251. The Schiff-base intermediate with substrate; via pyruvic acid; for decarboxylase activity role is filled by Ser-251. Ser-251 bears the Pyruvic acid (Ser); by autocatalysis mark.

Belongs to the phosphatidylserine decarboxylase family. PSD-B subfamily. Prokaryotic type II sub-subfamily. In terms of assembly, heterodimer of a large membrane-associated beta subunit and a small pyruvoyl-containing alpha subunit. Pyruvate is required as a cofactor. Is synthesized initially as an inactive proenzyme. Formation of the active enzyme involves a self-maturation process in which the active site pyruvoyl group is generated from an internal serine residue via an autocatalytic post-translational modification. Two non-identical subunits are generated from the proenzyme in this reaction, and the pyruvate is formed at the N-terminus of the alpha chain, which is derived from the carboxyl end of the proenzyme. The autoendoproteolytic cleavage occurs by a canonical serine protease mechanism, in which the side chain hydroxyl group of the serine supplies its oxygen atom to form the C-terminus of the beta chain, while the remainder of the serine residue undergoes an oxidative deamination to produce ammonia and the pyruvoyl prosthetic group on the alpha chain. During this reaction, the Ser that is part of the protease active site of the proenzyme becomes the pyruvoyl prosthetic group, which constitutes an essential element of the active site of the mature decarboxylase.

It localises to the cell membrane. It catalyses the reaction a 1,2-diacyl-sn-glycero-3-phospho-L-serine + H(+) = a 1,2-diacyl-sn-glycero-3-phosphoethanolamine + CO2. The protein operates within phospholipid metabolism; phosphatidylethanolamine biosynthesis; phosphatidylethanolamine from CDP-diacylglycerol: step 2/2. In terms of biological role, catalyzes the formation of phosphatidylethanolamine (PtdEtn) from phosphatidylserine (PtdSer). The protein is Phosphatidylserine decarboxylase proenzyme 2 of Clostridium acetobutylicum (strain ATCC 824 / DSM 792 / JCM 1419 / IAM 19013 / LMG 5710 / NBRC 13948 / NRRL B-527 / VKM B-1787 / 2291 / W).